Consider the following 315-residue polypeptide: Probable cell division protein WhiA (315 aa).

The H-T-H motif DNA-binding region spans serine 274 to alanine 308.

It belongs to the WhiA family.

Its function is as follows. Involved in cell division and chromosome segregation. In Ligilactobacillus salivarius (strain UCC118) (Lactobacillus salivarius), this protein is Probable cell division protein WhiA.